The sequence spans 488 residues: Integrin beta-like protein 1 (488 aa).

The first 21 residues, 1-21, serve as a signal peptide directing secretion; the sequence is MHAGAFINFVWALSLVSLLAA. Disulfide bonds link C38-C65, C49-C63, C57-C68, C70-C83, C85-C106, C90-C104, C98-C109, C111-C120, C126-C153, C137-C151, C145-C156, C158-C172, C174-C196, C179-C194, C188-C199, C201-C210, C214-C241, C225-C239, C233-C244, C246-C263, C265-C290, C270-C288, C282-C293, C295-C304, C310-C337, C321-C335, C329-C340, C342-C355, C357-C378, C362-C376, C370-C381, C383-C392, C398-C425, C409-C423, C417-C428, C430-C442, C444-C465, C449-C463, C457-C468, and C470-C479. I-EGF domains lie at 38–84, 85–121, 126–173, 174–211, 214–264, 265–305, 310–356, 357–393, 398–443, and 444–480; these read CRLP…PLCE, CHDW…EACQ, CDLT…KYCE, CDDT…DKCE, CDIT…DTCE, CDER…RKCE, CALS…KNCE, CDDR…KLCQ, CNMT…EFCE, and CDDR…NACE. An I repeat occupies 49–89; sequence CRTPDGSICSGRGSCDCGICLCEVKEAGKYYGPLCECHDWV. The cysteine-rich tandem repeats stretch occupies residues 49-488; the sequence is CRTPDGSICS…CEIWLGSEYP (440 aa). One copy of the II repeat lies at 90-136; that stretch reads CHTYDGQVCAGHGQCDCGVCKCDVGWSGEACQYPTTCDLTRKKSNEM. An III repeat occupies 137 to 178; that stretch reads CKNSQAVICSNAGTCQCGRCKCENSDNSGLIYGKYCECDDTE. An IV repeat occupies 179–224; sequence CFDDETQEICGGHGKCYCGNCYCEAGWHGDKCEFQCDITPWEIKKR. A V repeat occupies 225–269; that stretch reads CTSPDGKICSNRGTCVCGECTCHDVDPTGDWGDIHGDTCECDERN. The stretch at 270–320 is one VI repeat; sequence CKSVYDRYSDDFCSGHGQCNCGRCDCKDGWTGRKCEHPRACALSIEESKKK. One copy of the VII repeat lies at 321 to 361; that stretch reads CQGSASQPCSGRGKCECGQCTCFPPGDSKVYGKNCECDDRQ. The VIII repeat unit spans residues 362–408; the sequence is CEDLEGKICGEHGTCSCGRCICEAGWFGKLCQHERKCNMTEEESKSQ. N-linked (GlcNAc...) asparagine glycosylation is present at N399. The IX repeat unit spans residues 409–448; that stretch reads CESDDGILCSGKGSCHCGKCICSPQEWYVSGEFCECDDRD. Residues 449–488 form a X repeat; the sequence is CDKHDGLICTGNGICNCGNCECWEGWNGNACEIWLGSEYP.

The protein localises to the secreted. The sequence is that of Integrin beta-like protein 1 (itgbl1) from Xenopus laevis (African clawed frog).